The following is a 65-amino-acid chain: Putative cytochrome c oxidase subunit 5C-4 (65 aa).

The helical transmembrane segment at 20–37 threads the bilayer; that stretch reads EIIYGITLGFAVGGLWKM.

It belongs to the cytochrome c oxidase subunit 5C family.

It localises to the mitochondrion inner membrane. Its function is as follows. This protein is one of the nuclear-coded polypeptide chains of cytochrome c oxidase, the terminal oxidase in mitochondrial electron transport. In Arabidopsis thaliana (Mouse-ear cress), this protein is Putative cytochrome c oxidase subunit 5C-4.